Reading from the N-terminus, the 628-residue chain is UvrABC system protein C (628 aa).

Positions 21–100 constitute a GIY-YIG domain; the sequence is TGPGIYQFKN…IKELKPRYNV (80 aa). The 36-residue stretch at 214–249 folds into the UVR domain; that stretch reads AGLLKELHEKMLTAAAELRFEEAAELKMQLQSLRRY.

This sequence belongs to the UvrC family. In terms of assembly, interacts with UvrB in an incision complex.

It is found in the cytoplasm. Its function is as follows. The UvrABC repair system catalyzes the recognition and processing of DNA lesions. UvrC both incises the 5' and 3' sides of the lesion. The N-terminal half is responsible for the 3' incision and the C-terminal half is responsible for the 5' incision. The sequence is that of UvrABC system protein C from Chlorobium luteolum (strain DSM 273 / BCRC 81028 / 2530) (Pelodictyon luteolum).